An 833-amino-acid polypeptide reads, in one-letter code: Vacuolar protein sorting-associated protein 16 homolog (833 aa).

This sequence belongs to the VPS16 family. Component of the homotypic fusion and vacuole protein sorting (HOPS) complex, composed of Vps16A, car/Vps33A, dor/Vps18, Vps39, Vps11 and lt/Vps41. Interacts with Syx17 (via SNARE domain); the interaction may involve multiple components of the HOPS complex and may promote assembly of the Syx17-Snap29-Vamp7 trans-SNARE complex. Component of the class C core vacuole/endosome tethering (CORVET) complex composed of at least Vps8, dor/Vps18, car/Vps33A and Vps16A; unlike in other species, Vps11 is not part of the Drosophila complex. Due to the reduced number of components the Drosophila CORVET complex is often referred to as the miniCORVET complex. The tethering complex core made up of Vps16A, car/Vps33A and dor/Vps18 and shared by both HOPS and CORVET, preferentially associates with CORVET-specific Vps8 over HOPS-specific lt/Vps41. Interacts with Rab2 (GTP-bound form).

It is found in the late endosome membrane. It localises to the lysosome membrane. Its subcellular location is the cytoplasmic vesicle. The protein localises to the autophagosome. Functionally, core component of the class C core vacuole/endosome tethering (CORVET) and the homotypic fusion and vacuole protein sorting (HOPS) tethering complexes involved in endo-lysosomal vesicle trafficking and lysosome biogenesis. The CORVET complex facilitates docking and fusion of endosomal vesicles during endosome maturation, acts upstream of HOPS, but is not involved in autophagic flux. The CORVET complex may cooperate with the early endosomal tether Rbsn-5 to mediate endosomal fusion. The HOPS complex facilitates docking and fusion of lysosomes with late endosomes and several other types of vesicles. The HOPS complex is also involved in autophagy and crinophagy (the elimination of unused secretory granules through their fusion with lysosomes). The HOPS complex mediates autophagocitic flux, probably by binding autophagosome-associated Syx17/syntaxin 17, promoting assembly of the trans-SNARE complex and instigating autophagosome-lysosome fusion. Independent of Syx17/syntaxin 17, HOPS is involved in biosynthetic transport to lysosomes and lysosome-related organelles such as eye-pigment granules. Required for endocytic degradation of boss/bride of sevenless and N/Notch in developing ommatidia. The protein is Vacuolar protein sorting-associated protein 16 homolog of Drosophila melanogaster (Fruit fly).